The chain runs to 242 residues: Peroxisomal membrane protein 11-3 (242 aa).

Residues M1–P22 form a disordered region. Topologically, residues M1–A102 are cytoplasmic. The chain crosses the membrane as a helical span at residues V103 to L123. At A124–K214 the chain is on the lumenal side. The helical transmembrane segment at G215 to A235 threads the bilayer. At H236–C242 the chain is on the cytoplasmic side.

The protein belongs to the peroxin-11 family. Expressed in seedlings, roots, leaf sheaths, spikelets and endosperm.

It is found in the peroxisome membrane. Its function is as follows. Involved in peroxisomal proliferation. This Oryza sativa subsp. japonica (Rice) protein is Peroxisomal membrane protein 11-3 (PEX11-3).